The following is a 473-amino-acid chain: GTPase Der (473 aa).

2 EngA-type G domains span residues 3–167 and 203–378; these read FTVA…GKDR and LRVA…RVWN. GTP contacts are provided by residues 9 to 16, 56 to 60, 119 to 122, 209 to 216, 256 to 260, and 321 to 324; these read GRPNVGKS, DTAGL, NKSE, GRPNAGKS, DTAGM, and NKWD. Residues 379–463 enclose the KH-like domain; sequence KRISTARLNR…PIRIHFRSPD (85 aa).

It belongs to the TRAFAC class TrmE-Era-EngA-EngB-Septin-like GTPase superfamily. EngA (Der) GTPase family. Associates with the 50S ribosomal subunit.

Functionally, GTPase that plays an essential role in the late steps of ribosome biogenesis. This is GTPase Der from Rhizobium etli (strain ATCC 51251 / DSM 11541 / JCM 21823 / NBRC 15573 / CFN 42).